The primary structure comprises 89 residues: DNA/RNA-binding protein Alba (89 aa).

Residue lysine 11 is modified to N6-acetyllysine.

The protein belongs to the histone-like Alba family. In terms of processing, acetylated. Acetylation at Lys-11 decreases DNA-binding affinity.

Its subcellular location is the cytoplasm. The protein resides in the chromosome. In terms of biological role, binds double-stranded DNA tightly but without sequence specificity. Involved in DNA compaction. The chain is DNA/RNA-binding protein Alba from Thermoplasma acidophilum (strain ATCC 25905 / DSM 1728 / JCM 9062 / NBRC 15155 / AMRC-C165).